The chain runs to 309 residues: THAP domain-containing protein 7 (309 aa).

Residues 1-93 (MPRHCSAAGC…LKEGAVPTIF (93 aa)) form a THAP-type zinc finger. The disordered stretch occupies residues 158 to 209 (TLPASPAGRLEPGLSSPFSDLLGPLGAQADEAGCSAQPSPERQPSPLEPRPV). Serine 162 carries the phosphoserine modification. A compositionally biased stretch (pro residues) spans 198–209 (ERQPSPLEPRPV). A Phosphoserine modification is found at serine 210. The short motif at 229-232 (EHSY) is the HCFC1-binding motif (HBM) element.

As to quaternary structure, forms homodimers. Interacts with HDAC3 and nuclear hormone receptor corepressors. Interacts via HBM with HCFC1.

It localises to the nucleus. The protein localises to the chromosome. Chromatin-associated, histone tail-binding protein that represses transcription via recruitment of HDAC3 and nuclear hormone receptor corepressors. This Homo sapiens (Human) protein is THAP domain-containing protein 7 (THAP7).